The following is a 107-amino-acid chain: U1-lycotoxin-Ls1a (107 aa).

The first 20 residues, 1-20, serve as a signal peptide directing secretion; it reads MMKVLVVVALLVTLISYSSS. A propeptide spanning residues 21–41 is cleaved from the precursor; that stretch reads EGIDDLEADELLSLMANEQTR. Disulfide bonds link Cys44–Cys59, Cys51–Cys68, Cys58–Cys86, and Cys70–Cys84.

Belongs to the neurotoxin 19 (CSTX) family. 04 (U1-Lctx) subfamily. Expressed by the venom gland.

It is found in the secreted. The sequence is that of U1-lycotoxin-Ls1a from Lycosa singoriensis (Wolf spider).